The primary structure comprises 637 residues: MNDWSIDDARAGYNVTHWSQGFYGISDHGEVTVSPDPKNPDYKIGLNELAKDMVKAGVALPVLVRFPQILHHRVNSLCQAFDQAIQKYEYQADYLLVYPIKVNQQQTVVEEILASQASKEVPQLGLEAGSKPELMAVLAMAQKASSVIVCNGYKDNEYIRLALIGEKLGHKVYIVLEKLSELKMVLAESKRLGVTPRLGLRARLAFQGKGKWQASGGEKSKFGLSAAQILLVVEQLKQNDMLDSLQLLHFHLGSQIANIRDIRQGVSEAGRFYCELRALGASVNCFDVGGGLAVDYDGTRSQSNNSMNYGLTEYANNIVNVLTDICNEYEQPMPRIISESGRYLTAHHAVLITDVIGTEAYQPEDIQPPAEESPQLLHNMWHSWSELSGRADQRALIEIYHDSQSDLQEAHSLFALGQLSLAERAWAEQANLRVCHEVQGLLSAKNRYHRPIIDELNEKLADKFFVNFSLFQSLPDAWGIDQVFPVLPLSGLDKAPERRAVMLDITCDSDGIVDQYVDGQGIETTLPVPAWSADSPYLIGFFLVGAYQEILGDMHNLFGDTNSAVVRIEDNGVTNIESVLAGDTVADVLRYVNLDAVAFMRTYEELVNLHIAKDERAQILEELQVGLKGYTYLEDFS.

K101 carries the post-translational modification N6-(pyridoxal phosphate)lysine. F286–Y296 is a binding site for substrate.

This sequence belongs to the Orn/Lys/Arg decarboxylase class-II family. SpeA subfamily. Mg(2+) is required as a cofactor. It depends on pyridoxal 5'-phosphate as a cofactor.

It catalyses the reaction L-arginine + H(+) = agmatine + CO2. Its pathway is amine and polyamine biosynthesis; agmatine biosynthesis; agmatine from L-arginine: step 1/1. In terms of biological role, catalyzes the biosynthesis of agmatine from arginine. This Shewanella baltica (strain OS195) protein is Biosynthetic arginine decarboxylase.